A 100-amino-acid chain; its full sequence is Probable antitoxin MazE1 (100 aa).

The disordered stretch occupies residues 77 to 100 (PYESEAERSAARARRNARQQRSAQ).

Forms a complex with cognate toxin MazF1.

In terms of biological role, probable antitoxin component of a type II toxin-antitoxin (TA) system. Labile antitoxin that binds to cognate MazF1 toxin and counteracts its endoribonuclease activity. The sequence is that of Probable antitoxin MazE1 (mazE1) from Mycobacterium bovis (strain ATCC BAA-935 / AF2122/97).